The following is a 141-amino-acid chain: D-aminoacyl-tRNA deacylase (141 aa).

Residues 133 to 134 (GP) carry the Gly-cisPro motif, important for rejection of L-amino acids motif.

It belongs to the DTD family. Homodimer.

The protein resides in the cytoplasm. It carries out the reaction glycyl-tRNA(Ala) + H2O = tRNA(Ala) + glycine + H(+). The catalysed reaction is a D-aminoacyl-tRNA + H2O = a tRNA + a D-alpha-amino acid + H(+). Functionally, an aminoacyl-tRNA editing enzyme that deacylates mischarged D-aminoacyl-tRNAs. Also deacylates mischarged glycyl-tRNA(Ala), protecting cells against glycine mischarging by AlaRS. Acts via tRNA-based rather than protein-based catalysis; rejects L-amino acids rather than detecting D-amino acids in the active site. By recycling D-aminoacyl-tRNA to D-amino acids and free tRNA molecules, this enzyme counteracts the toxicity associated with the formation of D-aminoacyl-tRNA entities in vivo and helps enforce protein L-homochirality. This is D-aminoacyl-tRNA deacylase from Kineococcus radiotolerans (strain ATCC BAA-149 / DSM 14245 / SRS30216).